The chain runs to 201 residues: Potassium-transporting ATPase KdpC subunit (201 aa).

The chain crosses the membrane as a helical span at residues 7–27 (PAFVVLIALTALTGLAYPLAM).

It belongs to the KdpC family. In terms of assembly, the system is composed of three essential subunits: KdpA, KdpB and KdpC.

It is found in the cell inner membrane. Functionally, part of the high-affinity ATP-driven potassium transport (or Kdp) system, which catalyzes the hydrolysis of ATP coupled with the electrogenic transport of potassium into the cytoplasm. This subunit acts as a catalytic chaperone that increases the ATP-binding affinity of the ATP-hydrolyzing subunit KdpB by the formation of a transient KdpB/KdpC/ATP ternary complex. This chain is Potassium-transporting ATPase KdpC subunit, found in Xanthobacter autotrophicus (strain ATCC BAA-1158 / Py2).